The primary structure comprises 299 residues: ATP phosphoribosyltransferase (299 aa).

It belongs to the ATP phosphoribosyltransferase family. Long subfamily. Mg(2+) is required as a cofactor.

The protein resides in the cytoplasm. The catalysed reaction is 1-(5-phospho-beta-D-ribosyl)-ATP + diphosphate = 5-phospho-alpha-D-ribose 1-diphosphate + ATP. Its pathway is amino-acid biosynthesis; L-histidine biosynthesis; L-histidine from 5-phospho-alpha-D-ribose 1-diphosphate: step 1/9. Feedback inhibited by histidine. In terms of biological role, catalyzes the condensation of ATP and 5-phosphoribose 1-diphosphate to form N'-(5'-phosphoribosyl)-ATP (PR-ATP). Has a crucial role in the pathway because the rate of histidine biosynthesis seems to be controlled primarily by regulation of HisG enzymatic activity. This chain is ATP phosphoribosyltransferase, found in Shewanella frigidimarina (strain NCIMB 400).